A 233-amino-acid polypeptide reads, in one-letter code: Demethylmenaquinone methyltransferase (233 aa).

S-adenosyl-L-methionine-binding positions include Thr58, Asp79, and 106–107 (NA).

This sequence belongs to the class I-like SAM-binding methyltransferase superfamily. MenG/UbiE family.

It carries out the reaction a 2-demethylmenaquinol + S-adenosyl-L-methionine = a menaquinol + S-adenosyl-L-homocysteine + H(+). It functions in the pathway quinol/quinone metabolism; menaquinone biosynthesis; menaquinol from 1,4-dihydroxy-2-naphthoate: step 2/2. Methyltransferase required for the conversion of demethylmenaquinol (DMKH2) to menaquinol (MKH2). The sequence is that of Demethylmenaquinone methyltransferase from Bacillus subtilis (strain 168).